A 144-amino-acid polypeptide reads, in one-letter code: Large ribosomal subunit protein uL15 (144 aa).

Residues 1 to 58 (MKLNTLSPAAGAKHAAKRVGRGIGSGLGKTAGRGHKGQKSRSGGSIRPGFEGGQMPLK) are disordered. Residues 21 to 31 (RGIGSGLGKTA) are compositionally biased toward gly residues.

It belongs to the universal ribosomal protein uL15 family. As to quaternary structure, part of the 50S ribosomal subunit.

Binds to the 23S rRNA. This is Large ribosomal subunit protein uL15 from Psychromonas ingrahamii (strain DSM 17664 / CCUG 51855 / 37).